Reading from the N-terminus, the 1789-residue chain is Protein sprint (1789 aa).

6 disordered regions span residues 53–120 (TTAN…AHPP), 140–190 (TTTA…DLAN), 218–237 (PLWN…HPTG), 261–317 (QRMH…QAGL), 329–378 (LNNN…DADD), and 401–460 (RRSR…PCDL). Residues 82-114 (SINNNKNNNISNKNNNNNNNNNNNINNNNNNNN) show a composition bias toward low complexity. The segment covering 140-149 (TTTANQLQQQ) has biased composition (polar residues). A compositionally biased stretch (acidic residues) spans 176–185 (PSEEDGDTDA). Residues 223–233 (RNGNGSTTTHC) show a composition bias toward polar residues. A compositionally biased stretch (low complexity) spans 295-317 (NNNNINNNHNGQQSQKSQQQAGL). Positions 337–361 (QPGSMTPASNRTGLDSNQNQKQNLN) are enriched in polar residues. Positions 409-418 (QSRTSLVSSS) are enriched in low complexity. Over residues 428–445 (TSSEDDEEEPVEAEDEGE) the composition is skewed to acidic residues. One can recognise an SH2 domain in the interval 473–566 (WFLPGIQRSG…ELPVQLMLPR (94 aa)). 7 disordered regions span residues 632–689 (FFSD…SGGQ), 744–787 (TAPE…SANG), 852–918 (GECK…ILES), 969–1006 (DLLA…QSLL), 1040–1067 (AAED…QGSP), 1094–1123 (RSQM…MLQP), and 1138–1160 (PKPK…KRAR). Residues 639-649 (KPPPTGAPPLP) show a composition bias toward pro residues. The span at 671 to 686 (TPSDTTNSSLSSFTTS) shows a compositional bias: low complexity. Polar residues predominate over residues 857–868 (TLSSQGSSSNDS). Positions 903–914 (AGKESQHYKESD) are enriched in basic and acidic residues. A compositionally biased stretch (low complexity) spans 974-984 (TPSTPTPTQQS). Polar residues-rich tracts occupy residues 994–1006 (TATP…QSLL) and 1048–1065 (TTPT…SKQG). A compositionally biased stretch (low complexity) spans 1143–1154 (SQQQQQSQQQQQ). A VPS9 domain is found at 1531–1673 (RSEDIQLLAQ…LKTFMASEGE (143 aa)). The Ras-associating domain maps to 1689–1777 (CSSVLRVIIP…CMLAYKRIDA (89 aa)).

The protein belongs to the RIN (Ras interaction/interference) family. In late cellular blastoderm embryos, it is expressed in the posterior end. Then, as development proceeds, it is expressed in the developing midgut, amnioserosa and in a specific subset of CNS neurons. Isoform 1 is expressed earlier in developing midgut and amnioserosa, but is not expressed in the CNS.

In terms of biological role, potential Ras effector protein. May function as a guanine nucleotide exchange (GEF), by exchanging bound GDP for free GTP. This chain is Protein sprint (spri), found in Drosophila melanogaster (Fruit fly).